The chain runs to 21 residues: Putative NADH dehydrogenase subunit PS9 (21 aa).

This Pinus strobus (Eastern white pine) protein is Putative NADH dehydrogenase subunit PS9.